Consider the following 494-residue polypeptide: Guanosine-5'-triphosphate,3'-diphosphate pyrophosphatase (494 aa).

This sequence belongs to the GppA/Ppx family. GppA subfamily.

The enzyme catalyses guanosine 3'-diphosphate 5'-triphosphate + H2O = guanosine 3',5'-bis(diphosphate) + phosphate + H(+). It functions in the pathway purine metabolism; ppGpp biosynthesis; ppGpp from GTP: step 2/2. Catalyzes the conversion of pppGpp to ppGpp. Guanosine pentaphosphate (pppGpp) is a cytoplasmic signaling molecule which together with ppGpp controls the 'stringent response', an adaptive process that allows bacteria to respond to amino acid starvation, resulting in the coordinated regulation of numerous cellular activities. This Escherichia coli O6:H1 (strain CFT073 / ATCC 700928 / UPEC) protein is Guanosine-5'-triphosphate,3'-diphosphate pyrophosphatase.